A 117-amino-acid polypeptide reads, in one-letter code: MGWSCIMLFLAATATGVHSQVQLQQPGAELVKPGASVKLSCKASGYTFTSYWMHWVKQRPGRGLEWIGRIDPNSGGTKYNEKFKSKATLTVDKPSSTAYMQLSSLTSEDSAVYYCAR.

The signal sequence occupies residues 1 to 19 (MGWSCIMLFLAATATGVHS). The segment at 20–49 (QVQLQQPGAELVKPGASVKLSCKASGYTFT) is framework-1. The cysteines at positions 41 and 115 are disulfide-linked. The segment at 50–54 (SYWMH) is complementarity-determining-1. Residues 55–68 (WVKQRPGRGLEWIG) are framework-2. The tract at residues 69–85 (RIDPNSGGTKYNEKFKS) is complementarity-determining-2. Residues 86-117 (KATLTVDKPSSTAYMQLSSLTSEDSAVYYCAR) form a framework-3 region.

This chain is Ig heavy chain V region 1-72, found in Mus musculus (Mouse).